We begin with the raw amino-acid sequence, 389 residues long: MASQVGAINSVNALISRVFVQPKGDLADRLNSRVTVVILAVSSALLLSSHFIGDPITCWTPAQFNAQWVNFVNQYCFVHGTYFVPLDQQLAFEEEERTKVSIQYYQWVPYVFALQAFLFYIPRFIWKAMIAYSGYDLAAAVKYVDRFWSENRDKDDKFKTRLAAFEGRPSVYIWDGIRLARKKRSRNMALFYTLSTVWQAVNAWIQFYILTQLLDSSIYTLWGPSILGDLLQGNDWQTTGHFPRIVHCDFNRRRPASVQLDTVLCVLTLNIYYEKLFIFLWFWLVFVAVVSTVNCFKWIYYLCNKTKAQKTIKNYLSTAPIKSTISDDQFFSALGEDGLFIMDQMALNLGDIPASYLTISMRNICQDFIESEDYIDEERTPFVKSIKHT.

4 helical membrane-spanning segments follow: residues 36–56 (VVIL…GDPI), 111–131 (VFAL…AMIA), 190–210 (LFYT…FYIL), and 276–296 (LFIF…VNCF).

The protein belongs to the pannexin family.

The protein resides in the cell membrane. Its subcellular location is the cell junction. The protein localises to the gap junction. Its function is as follows. Structural component of the gap junctions. In Caenorhabditis elegans, this protein is Innexin-6 (inx-6).